The primary structure comprises 420 residues: MKYRRIKGTNDIFGEEIWYWRYVEETFRNVCESAGIEEIRTPIFEQTELFVRSVGEESDIVQKEMYTFQDKAGRSITLRPEGTAPVVRAFLENSLIDRGFQQRYYYIGPMFRYEKPQSGRLRQFHQVGFEIIGPESPKADFEVIMLVDTFLRRLGLTKYKIHLNSIGCPVCRKNYREALKEYYGRILDNLCDDCKRRYETNILRLLDCKVDHEYSLNAPKSVDYLCDSCRAHYKKLKEYLNTFEIEYVEDHTLVRGLDYYTRTVFEVRHEGLGAQSAIAGGGRYDGLFAELGGSSVPALGFAGGIERIILALKAEGIEIPMKNVHLVYIATLGEKAFMDGVRLAGELRKKGLSVDVDIMDRKLSGQLKHASRMGSRYAVIIGDEELEKGIVILRDLETGDQVEIDRDFAADYIAERVSKD.

Belongs to the class-II aminoacyl-tRNA synthetase family. In terms of assembly, homodimer.

It localises to the cytoplasm. The enzyme catalyses tRNA(His) + L-histidine + ATP = L-histidyl-tRNA(His) + AMP + diphosphate + H(+). The polypeptide is Histidine--tRNA ligase (hisS) (Thermotoga maritima (strain ATCC 43589 / DSM 3109 / JCM 10099 / NBRC 100826 / MSB8)).